The primary structure comprises 273 residues: Photosystem I chlorophyll a/b-binding protein 3-1, chloroplastic (273 aa).

A chloroplast-targeting transit peptide spans 1 to 39; that stretch reads MAAQALVSSSLTSSVQTARQIFGSKPVASASQKKSSFVV. Trp-56 is a chlorophyll b binding site. Chlorophyll a contacts are provided by Phe-76, Ser-82, and Glu-100. Residue Arg-105 coordinates chlorophyll b. The chain crosses the membrane as a helical span at residues 106–126; sequence FAMLGAAGAIAPEILGKAGLI. Ile-140 lines the chlorophyll b pocket. The helical transmembrane segment at 146 to 166 threads the bilayer; the sequence is YTYWADNYTLFVLEMALMGFA. Chlorophyll b-binding residues include Glu-167 and Arg-170. Ser-195 is subject to Phosphoserine. Positions 224, 225, 228, 230, 242, and 257 each coordinate chlorophyll a. A helical transmembrane segment spans residues 231–251; it reads LAMLAILGYFIQGLVTGVGPY. Chlorophyll b is bound at residue Phe-272.

Belongs to the light-harvesting chlorophyll a/b-binding (LHC) protein family. As to quaternary structure, the LHC complex consists of chlorophyll a-b binding proteins. Red-emitting heterodimer with LHCA2. Interacts with LHCA5. Binds to carotenoids. Binds at least 14 chlorophylls (8 Chl-a and 6 Chl-b) and carotenoids such as lutein and neoxanthin. is required as a cofactor. Post-translationally, photoregulated by reversible phosphorylation of its threonine residues.

The protein resides in the plastid. Its subcellular location is the chloroplast thylakoid membrane. In terms of biological role, the light-harvesting complex (LHC) functions as a light receptor, it captures and delivers excitation energy to photosystems with which it is closely associated, here photosystem I. This Arabidopsis thaliana (Mouse-ear cress) protein is Photosystem I chlorophyll a/b-binding protein 3-1, chloroplastic.